Here is a 1622-residue protein sequence, read N- to C-terminus: ABC transporter C family member 1 (1622 aa).

The next 9 helical transmembrane spans lie at 37–57, 73–93, 110–130, 145–165, 174–194, 336–356, 440–460, 527–547, and 557–577; these read FVLG…LWLI, FSYF…FRLV, EAFM…MTVV, FAVI…LSVK, YLYI…FVYF, AWIG…GVLC, VASI…TVII, FILN…FSLL, and FTSL…PNII. Residues 302 to 582 form the ABC transmembrane type-1 1 domain; sequence FWWGGFWKIG…LPNIITQMVN (281 aa). In terms of domain architecture, ABC transporter 1 spans 614–838; it reads ISIRNGYFSW…GPLFQRLMEN (225 aa). An ATP-binding site is contributed by 649-656; it reads GSTGEGKT. Residues 852–876 form a disordered region; the sequence is AEVDQTSVKPVENGNANNLQKDGIE. The span at 855–871 shows a compositional bias: polar residues; that stretch reads DQTSVKPVENGNANNLQ. A run of 6 helical transmembrane segments spans residues 909-929, 951-971, 1027-1049, 1053-1072, 1138-1158, and 1172-1192; these read ALGG…TQVF, PLFY…VTLI, AVFV…LIGI, LSLW…YLYY, LGIR…SLAV, and STMG…TAVL. Positions 916-1200 constitute an ABC transmembrane type-1 2 domain; sequence VMMLVICYVL…VLRLASLAEN (285 aa). Residues 1231–1246 form an interaction with calmodulin and FKP42/TWD1 region; that stretch reads WPSSGSIKFEDVVLRY. Residues 1237-1471 form the ABC transporter 2 domain; sequence IKFEDVVLRY…GESSFSKMVQ (235 aa). 1271–1278 contributes to the ATP binding site; that stretch reads GRTGAGKS.

This sequence belongs to the ABC transporter superfamily. ABCC family. Conjugate transporter (TC 3.A.1.208) subfamily. In terms of assembly, interacts with calmodulin (CaM), PAS1 and FKBP42/TWD1. As to expression, ubiquitous, with higher levels in leaves and stems and lower levels in roots. Localized in the root apex, root hair tips and root epidermis.

Its subcellular location is the vacuole membrane. The enzyme catalyses ATP + H2O + xenobioticSide 1 = ADP + phosphate + xenobioticSide 2.. Pump for glutathione S-conjugates. Mediates the transport of S-(2,4-dinitrophenyl)-glutathione (DNP-GS), GSSG, cyanidin 3-glucoside-GS (C3G-GS) and metolachlor-GS (MOC-GS). The chain is ABC transporter C family member 1 (ABCC1) from Arabidopsis thaliana (Mouse-ear cress).